Here is a 438-residue protein sequence, read N- to C-terminus: Coenzyme A disulfide reductase (438 aa).

FAD is bound at residue 8 to 33; that stretch reads GAVAGGATCASQIRRLDKESDIIIFE. Substrate is bound by residues Thr15, Gln19, Arg22, Ser39, and Asn42. Cys43 functions as the Nucleophile in the catalytic mechanism. Cys43 acts as the Redox-active in catalysis. Lys71 contacts substrate. 151 to 166 lines the NADP(+) pocket; sequence VLVVGAGYVSLEVLEN. 267–277 is a binding site for FAD; that stretch reads TNVPNIYAIGD. His299 is a substrate binding site. FAD is bound at residue Tyr419. Lys427 is a binding site for substrate.

This sequence belongs to the class-III pyridine nucleotide-disulfide oxidoreductase family. As to quaternary structure, homodimer. FAD serves as cofactor.

It catalyses the reaction NADP(+) + 2 CoA = CoA-disulfide + NADPH + H(+). Its function is as follows. Catalyzes specifically the NADPH-dependent reduction of coenzyme A disulfide. In Staphylococcus aureus (strain COL), this protein is Coenzyme A disulfide reductase.